The primary structure comprises 167 residues: Lipoprotein signal peptidase (167 aa).

A run of 4 helical transmembrane segments spans residues 8–28 (TFLT…VVLL), 46–66 (WGHF…FGLF), 68–88 (QYKI…ALFL), and 101–121 (IALT…LLHG). Catalysis depends on residues Asp125 and Asp143. Residues 139-159 (FNLADAFISIGTLLLIGHLYF) form a helical membrane-spanning segment.

Belongs to the peptidase A8 family.

It localises to the cell inner membrane. The catalysed reaction is Release of signal peptides from bacterial membrane prolipoproteins. Hydrolyzes -Xaa-Yaa-Zaa-|-(S,diacylglyceryl)Cys-, in which Xaa is hydrophobic (preferably Leu), and Yaa (Ala or Ser) and Zaa (Gly or Ala) have small, neutral side chains.. Its pathway is protein modification; lipoprotein biosynthesis (signal peptide cleavage). This protein specifically catalyzes the removal of signal peptides from prolipoproteins. The polypeptide is Lipoprotein signal peptidase (Chlamydia trachomatis serovar L2b (strain UCH-1/proctitis)).